The following is a 266-amino-acid chain: Small ribosomal subunit protein uS2 (266 aa).

This sequence belongs to the universal ribosomal protein uS2 family.

The sequence is that of Small ribosomal subunit protein uS2 from Bartonella tribocorum (strain CIP 105476 / IBS 506).